We begin with the raw amino-acid sequence, 61 residues long: Small ribosomal subunit protein uS14 (61 aa).

4 residues coordinate Zn(2+): Cys24, Cys27, Cys40, and Cys43.

It belongs to the universal ribosomal protein uS14 family. Zinc-binding uS14 subfamily. In terms of assembly, part of the 30S ribosomal subunit. Contacts proteins S3 and S10. It depends on Zn(2+) as a cofactor.

Functionally, binds 16S rRNA, required for the assembly of 30S particles and may also be responsible for determining the conformation of the 16S rRNA at the A site. The chain is Small ribosomal subunit protein uS14 from Moorella thermoacetica (strain ATCC 39073 / JCM 9320).